A 477-amino-acid polypeptide reads, in one-letter code: Glycogen synthase (477 aa).

Lys-15 is a binding site for ADP-alpha-D-glucose.

This sequence belongs to the glycosyltransferase 1 family. Bacterial/plant glycogen synthase subfamily.

It catalyses the reaction [(1-&gt;4)-alpha-D-glucosyl](n) + ADP-alpha-D-glucose = [(1-&gt;4)-alpha-D-glucosyl](n+1) + ADP + H(+). The protein operates within glycan biosynthesis; glycogen biosynthesis. Its function is as follows. Synthesizes alpha-1,4-glucan chains using ADP-glucose. This Streptococcus pneumoniae (strain 70585) protein is Glycogen synthase.